The primary structure comprises 115 residues: NADH-ubiquinone oxidoreductase chain 3 (115 aa).

A run of 3 helical transmembrane segments spans residues 1-21 (MMML…VMLL), 58-78 (IAVI…IVII), and 84-104 (IMVW…GLYY).

Belongs to the complex I subunit 3 family.

Its subcellular location is the mitochondrion membrane. It carries out the reaction a ubiquinone + NADH + 5 H(+)(in) = a ubiquinol + NAD(+) + 4 H(+)(out). Core subunit of the mitochondrial membrane respiratory chain NADH dehydrogenase (Complex I) that is believed to belong to the minimal assembly required for catalysis. Complex I functions in the transfer of electrons from NADH to the respiratory chain. The immediate electron acceptor for the enzyme is believed to be ubiquinone. This Locusta migratoria (Migratory locust) protein is NADH-ubiquinone oxidoreductase chain 3 (ND3).